Reading from the N-terminus, the 393-residue chain is NADH-quinone oxidoreductase subunit D (393 aa).

Belongs to the complex I 49 kDa subunit family. As to quaternary structure, NDH-1 is composed of 14 different subunits. Subunits NuoB, C, D, E, F, and G constitute the peripheral sector of the complex.

It localises to the cell inner membrane. The enzyme catalyses a quinone + NADH + 5 H(+)(in) = a quinol + NAD(+) + 4 H(+)(out). Its function is as follows. NDH-1 shuttles electrons from NADH, via FMN and iron-sulfur (Fe-S) centers, to quinones in the respiratory chain. The immediate electron acceptor for the enzyme in this species is believed to be ubiquinone. Couples the redox reaction to proton translocation (for every two electrons transferred, four hydrogen ions are translocated across the cytoplasmic membrane), and thus conserves the redox energy in a proton gradient. This Ehrlichia canis (strain Jake) protein is NADH-quinone oxidoreductase subunit D.